Consider the following 217-residue polypeptide: GRB2-related adapter protein (217 aa).

The SH3 1 domain maps to 1–58 (MESVALYSFQATESDELAFNKGDTLKILNMEDDQNWYKAELRGVEGFIPKNYIRVKPH). The 95-residue stretch at 60 to 154 (WYSGRISRQL…QIFLRDEEPL (95 aa)) folds into the SH2 domain. An SH3 2 domain is found at 158-217 (PGACFAQAQFDFSAQDPSQLSFRRGDIIEVLERPDPHWWRGRSCGRVGFFPRSYVQPVHL).

This sequence belongs to the GRB2/sem-5/DRK family. Associates through its SH2 domain with ligand-activated receptors for stem cell factor (KIT) and erythropoietin (EPOR). Also forms a stable complex with the Bcr-Abl oncoprotein. GRAP is associated with the Ras guanine nucleotide exchange factor SOS1, primarily through its N-terminal SH3 domain. Interacts with phosphorylated LAT upon TCR activation. Interacts with SHB.

It localises to the membrane. The protein localises to the synapse. Functionally, couples signals from receptor and cytoplasmic tyrosine kinases to the Ras signaling pathway. Plays a role in the inner ear and in hearing. This Homo sapiens (Human) protein is GRB2-related adapter protein.